Reading from the N-terminus, the 374-residue chain is Peroxisome biogenesis factor 10 (374 aa).

Composition is skewed to polar residues over residues Met1–His11 and Val18–Arg31. Residues Met1 to Asp82 are Peroxisomal matrix-facing. Residues Met1–Asp82 form a disordered region. Low complexity predominate over residues Pro35 to Leu76. Residues Gln83 to Thr112 form a helical membrane-spanning segment. Gly113 is a topological domain (cytoplasmic). A helical membrane pass occupies residues Pro114–Leu135. The Peroxisomal matrix portion of the chain corresponds to Thr136–Pro165. Residues Asp166–Ile181 traverse the membrane as a helical segment. The Cytoplasmic segment spans residues Lys182–His192. A helical transmembrane segment spans residues Pro193–Asn216. The Peroxisomal matrix segment spans residues Gly217 to Lys243. A helical membrane pass occupies residues Tyr244–Leu263. Residues Lys264–Tyr374 lie on the Cytoplasmic side of the membrane. Zn(2+) contacts are provided by Cys322, Cys325, Cys337, His339, Cys342, Cys345, Cys356, and Cys359. The RING-type zinc finger occupies Cys322–Arg360.

It belongs to the pex2/pex10/pex12 family. In terms of assembly, component of the PEX2-PEX10-PEX12 retrotranslocation channel.

The protein localises to the peroxisome membrane. It carries out the reaction S-ubiquitinyl-[E2 ubiquitin-conjugating enzyme]-L-cysteine + [acceptor protein]-L-lysine = [E2 ubiquitin-conjugating enzyme]-L-cysteine + N(6)-ubiquitinyl-[acceptor protein]-L-lysine.. Its pathway is protein modification; protein ubiquitination. The E3 ubiquitin-protein ligase activity is stimulated by PEX12. E3 ubiquitin-protein ligase component of a retrotranslocation channel required for peroxisome organization by mediating export of the PEX5 receptor from peroxisomes to the cytosol, thereby promoting PEX5 recycling. The retrotranslocation channel is composed of PEX2, PEX10 and PEX12; each subunit contributing transmembrane segments that coassemble into an open channel that specifically allows the passage of PEX5 through the peroxisomal membrane. PEX10 also regulates PEX5 recycling by acting as a E3 ubiquitin-protein ligase. When PEX5 recycling is compromised, PEX10 catalyzes polyubiquitination of PEX5 during its passage through the retrotranslocation channel, leading to its degradation. The protein is Peroxisome biogenesis factor 10 (pex10) of Dictyostelium discoideum (Social amoeba).